The following is a 153-amino-acid chain: MQRDKIKVEIKKLSHGKSLPLPCYATMQSAGMDLYAALDDSVILNPLERLLIPTGIVIAIPNGFEGQVRPRSGLAAKHGITVLNSPGTIDSDYRGEVKVCLINLSNQPYEIKRGDRIAQILITPVPEIIWNNIEEFYAKETARNEGGFGSSGR.

Substrate is bound by residues 71-73, Asn84, 88-90, and Lys98; these read RSG and TID.

This sequence belongs to the dUTPase family. It depends on Mg(2+) as a cofactor.

It carries out the reaction dUTP + H2O = dUMP + diphosphate + H(+). The protein operates within pyrimidine metabolism; dUMP biosynthesis; dUMP from dCTP (dUTP route): step 2/2. Functionally, this enzyme is involved in nucleotide metabolism: it produces dUMP, the immediate precursor of thymidine nucleotides and it decreases the intracellular concentration of dUTP so that uracil cannot be incorporated into DNA. This chain is Deoxyuridine 5'-triphosphate nucleotidohydrolase, found in Wolbachia pipientis subsp. Culex pipiens (strain wPip).